A 289-amino-acid polypeptide reads, in one-letter code: Elongation factor Ts (289 aa).

The interval T82–L85 is involved in Mg(2+) ion dislocation from EF-Tu.

This sequence belongs to the EF-Ts family.

It is found in the cytoplasm. In terms of biological role, associates with the EF-Tu.GDP complex and induces the exchange of GDP to GTP. It remains bound to the aminoacyl-tRNA.EF-Tu.GTP complex up to the GTP hydrolysis stage on the ribosome. The protein is Elongation factor Ts of Pseudomonas paraeruginosa (strain DSM 24068 / PA7) (Pseudomonas aeruginosa (strain PA7)).